The chain runs to 106 residues: Large ribosomal subunit protein uL24 (106 aa).

This sequence belongs to the universal ribosomal protein uL24 family. As to quaternary structure, part of the 50S ribosomal subunit.

Its function is as follows. One of two assembly initiator proteins, it binds directly to the 5'-end of the 23S rRNA, where it nucleates assembly of the 50S subunit. Functionally, one of the proteins that surrounds the polypeptide exit tunnel on the outside of the subunit. The sequence is that of Large ribosomal subunit protein uL24 from Alkalilimnicola ehrlichii (strain ATCC BAA-1101 / DSM 17681 / MLHE-1).